Consider the following 523-residue polypeptide: MAGQQALLLFGFILPGLLFSEAAKILTVSLVGGSHFLLMHQISQILQDHGHNVTMLLQKGNLLLPGFKEEEKSYKVFNWFLPEDCNEEFKRSFHSFMEKTFGGRCKFEHFLNIMELLGHHCSHLLRRKDVMKSLKNENFDLVIVEMFDYCPFLVAEKLGKPFVAILPSALGTVDFGLPSPLSYVPVFYSLLTDQMDFWGRVKNFLMFFEFFKKQWKIQSAYDDTIKEHFPDDSRPVLSHLLTKAELWFVNTDFAFDFARPLLPNTVCIGGLMSKPVKPVPQEFENFITKFGDSGFVLVSLGSMVSFIRSQEVLKEMNAAFAHLPQGVIWKYNPSHWPKDIKLAPNVKIVHWLPQNDLLGHPRIRLFVSHGGMNSIMEAIQHGVPMVGIPLFGDQHENLLRVKAKKFGVSIQLKQIKAETLALKMKQVIEDKRYKSAAEAASIIRRSQPLTPAQRLVGWINHILQTGGAAHLKPHAFQQPWYEQYLLDVFLFLLVVTLGTMWLCGKLLGLVARWLCGARKLKKA.

A signal peptide spans 1–22 (MAGQQALLLFGFILPGLLFSEA). Residues 23–483 (AKILTVSLVG…HAFQQPWYEQ (461 aa)) are Extracellular-facing. An N-linked (GlcNAc...) asparagine glycan is attached at asparagine 52. A helical membrane pass occupies residues 484–504 (YLLDVFLFLLVVTLGTMWLCG). Over 505–523 (KLLGLVARWLCGARKLKKA) the chain is Cytoplasmic.

It belongs to the UDP-glycosyltransferase family.

The protein localises to the membrane. It catalyses the reaction glucuronate acceptor + UDP-alpha-D-glucuronate = acceptor beta-D-glucuronoside + UDP + H(+). Its function is as follows. UDP-glucuronosyltransferases catalyze phase II biotransformation reactions in which lipophilic substrates are conjugated with glucuronic acid to increase water solubility and enhance excretion. They are of major importance in the conjugation and subsequent elimination of potentially toxic xenobiotics and endogenous compounds. This chain is UDP-glucuronosyltransferase 3A1 (UGT3A1), found in Bos taurus (Bovine).